The following is a 101-amino-acid chain: MIPGEYQIQPGDIELNVGRRTVTLSVANSGDRPIQVGSHYHFFETNDALTFDRAASRGMRLNIPAGTAVRFEPGQSREIELVDLSGGRRVFGFAGRIMGDL.

Belongs to the urease beta subunit family. Heterotrimer of UreA (gamma), UreB (beta) and UreC (alpha) subunits. Three heterotrimers associate to form the active enzyme.

Its subcellular location is the cytoplasm. It carries out the reaction urea + 2 H2O + H(+) = hydrogencarbonate + 2 NH4(+). Its pathway is nitrogen metabolism; urea degradation; CO(2) and NH(3) from urea (urease route): step 1/1. This is Urease subunit beta from Pseudomonas fluorescens (strain SBW25).